The primary structure comprises 142 residues: Fusaric acid resistance protein FusB (142 aa).

Residues 73–142 (AAPCSRKAST…ASCSPAIRPR (70 aa)) form a disordered region. A compositionally biased stretch (low complexity) spans 81-142 (STGSPARSSG…ASCSPAIRPR (62 aa)).

In terms of biological role, involved in the resistance (detoxification) of the fungal toxin fusaric acid. The sequence is that of Fusaric acid resistance protein FusB (fusB) from Burkholderia cepacia (Pseudomonas cepacia).